The primary structure comprises 302 residues: N-acetylmuramic acid 6-phosphate etherase (302 aa).

Residues I58 to K221 enclose the SIS domain. E86 functions as the Proton donor in the catalytic mechanism. Residue E117 is part of the active site.

The protein belongs to the GCKR-like family. MurNAc-6-P etherase subfamily. Homodimer.

It catalyses the reaction N-acetyl-D-muramate 6-phosphate + H2O = N-acetyl-D-glucosamine 6-phosphate + (R)-lactate. It participates in amino-sugar metabolism; N-acetylmuramate degradation. Its function is as follows. Specifically catalyzes the cleavage of the D-lactyl ether substituent of MurNAc 6-phosphate, producing GlcNAc 6-phosphate and D-lactate. This chain is N-acetylmuramic acid 6-phosphate etherase, found in Clostridium botulinum (strain Hall / ATCC 3502 / NCTC 13319 / Type A).